Here is a 314-residue protein sequence, read N- to C-terminus: BRCA2 and CDKN1A-interacting protein (314 aa).

The tract at residues 1 to 56 is disordered; the sequence is MASRSKRRAVESGVPQPPDPPVQRDEEEEKEVENEDEDDDDSDKEKDEEDEVIDEE. Acidic residues predominate over residues 25-56; that stretch reads DEEEEKEVENEDEDDDDSDKEKDEEDEVIDEE. S42 and S112 each carry phosphoserine. Residues 59-167 form an interaction with BRCA2 region; sequence IEFEAYSLSD…EKSMVEQLDK (109 aa). Residues 161–259 are interaction with CDKN1A; that stretch reads MVEQLDKFLN…NAEEEFFYEK (99 aa). S281 bears the Phosphoserine mark.

The protein belongs to the BCP1 family. In terms of assembly, interacts with BRCA2, CDKN1A and MTDH/LYRIC. Isoform 2/alpha, but not isoform 1/beta, interacts with DCTN1/p150-glued and ACTR1A/ARP1. Both isoform 1 and isoform 2 interact with alpha-, beta- and gamma-tubulins. Interacts with TENT5C; the interaction has no effect on TENT5C poly(A) polymerase function. In terms of tissue distribution, expressed at high levels in testis and skeletal muscle and at lower levels in brain, heart, kidney, liver, lung, ovary, pancreas, placenta, and spleen.

It localises to the nucleus. The protein localises to the cytoplasm. Its subcellular location is the cytoskeleton. It is found in the microtubule organizing center. The protein resides in the centrosome. It localises to the centriole. The protein localises to the spindle pole. Its function is as follows. During interphase, required for microtubule organizing and anchoring activities. During mitosis, required for the organization and stabilization of the spindle pole. Isoform 2/alpha is particularly important for the regulation of microtubule anchoring, microtubule stability, spindle architecture and spindle orientation, compared to isoform 1/beta. May promote cell cycle arrest by enhancing the inhibition of CDK2 activity by CDKN1A. May be required for repair of DNA damage by homologous recombination in conjunction with BRCA2. May not be involved in non-homologous end joining (NHEJ). The polypeptide is BRCA2 and CDKN1A-interacting protein (BCCIP) (Homo sapiens (Human)).